The chain runs to 96 residues: Co-chaperonin GroES (96 aa).

It belongs to the GroES chaperonin family. In terms of assembly, heptamer of 7 subunits arranged in a ring. Interacts with the chaperonin GroEL.

It is found in the cytoplasm. In terms of biological role, together with the chaperonin GroEL, plays an essential role in assisting protein folding. The GroEL-GroES system forms a nano-cage that allows encapsulation of the non-native substrate proteins and provides a physical environment optimized to promote and accelerate protein folding. GroES binds to the apical surface of the GroEL ring, thereby capping the opening of the GroEL channel. This Halorhodospira halophila (strain DSM 244 / SL1) (Ectothiorhodospira halophila (strain DSM 244 / SL1)) protein is Co-chaperonin GroES.